The sequence spans 419 residues: Glutamyl-tRNA reductase (419 aa).

Substrate-binding positions include 50 to 53 (TCNR), Ser-108, 113 to 115 (ETQ), and Gln-119. Cys-51 acts as the Nucleophile in catalysis. Residue 188 to 193 (GAGEMI) coordinates NADP(+).

It belongs to the glutamyl-tRNA reductase family. Homodimer.

The enzyme catalyses (S)-4-amino-5-oxopentanoate + tRNA(Glu) + NADP(+) = L-glutamyl-tRNA(Glu) + NADPH + H(+). Its pathway is porphyrin-containing compound metabolism; protoporphyrin-IX biosynthesis; 5-aminolevulinate from L-glutamyl-tRNA(Glu): step 1/2. In terms of biological role, catalyzes the NADPH-dependent reduction of glutamyl-tRNA(Glu) to glutamate 1-semialdehyde (GSA). This chain is Glutamyl-tRNA reductase, found in Albidiferax ferrireducens (strain ATCC BAA-621 / DSM 15236 / T118) (Rhodoferax ferrireducens).